The chain runs to 436 residues: RNA-binding motif, single-stranded-interacting protein 3 (436 aa).

A disordered region spans residues 28–56 (APAPHPMAPPSPSTNSSSNNSSNNSSGEQ). Residues 30 to 39 (APHPMAPPSP) are compositionally biased toward pro residues. Residues 40-53 (STNSSSNNSSNNSS) show a composition bias toward low complexity. 2 consecutive RRM domains span residues 60-133 (TNLY…MAKQ) and 139-224 (TNLY…FADG). The span at 398–421 (TSPQTVAPSSQDTSGQQQQIAVDT) shows a compositional bias: polar residues. The segment at 398 to 436 (TSPQTVAPSSQDTSGQQQQIAVDTSNEHAPAYSYQQSKP) is disordered.

It localises to the cytoplasm. In terms of biological role, binds poly(A) and poly(U) oligoribonucleotides. This Pongo abelii (Sumatran orangutan) protein is RNA-binding motif, single-stranded-interacting protein 3 (RBMS3).